Consider the following 180-residue polypeptide: Translation initiation factor IF-3 (180 aa).

This sequence belongs to the IF-3 family. Monomer.

Its subcellular location is the cytoplasm. Functionally, IF-3 binds to the 30S ribosomal subunit and shifts the equilibrium between 70S ribosomes and their 50S and 30S subunits in favor of the free subunits, thus enhancing the availability of 30S subunits on which protein synthesis initiation begins. In Salmonella typhi, this protein is Translation initiation factor IF-3.